The sequence spans 1276 residues: Receptor-type guanylate cyclase gcy-28 (1276 aa).

A signal peptide spans 1-18 (MLRWLTLLSCILLTALHG). Topologically, residues 19-515 (NIVEDVGAAQ…KSKCPGYPLH (497 aa)) are extracellular. 8 N-linked (GlcNAc...) asparagine glycosylation sites follow: Asn-87, Asn-196, Asn-338, Asn-384, Asn-387, Asn-414, Asn-428, and Asn-444. The chain crosses the membrane as a helical span at residues 516-536 (VYLLMGSFLLILVLVGLFIFF). Residues 537-1276 (WRRYKLEQEL…EIPDFGEEFA (740 aa)) lie on the Cytoplasmic side of the membrane. Disordered regions lie at residues 562–601 (ESQKKNEKKKAKKRKNHNDYLPESDPLLRSTSRSSVNSDK) and 635–709 (IFTR…KKSL). The span at 567–577 (NEKKKAKKRKN) shows a compositional bias: basic residues. Composition is skewed to polar residues over residues 590 to 599 (RSTSRSSVNS) and 642 to 660 (TPPSESQKNGGLTPNSLQK). The 297-residue stretch at 717 to 1013 (SFGMVSFKSG…SSVRKAVRSL (297 aa)) folds into the Protein kinase domain. Residues 723–731 (FKSGSGGSV) and Lys-756 each bind ATP. Positions 1017 to 1063 (NETSNLVDNLLKRMEQYANNLEGLVEERTQEYLAEKKKVEELLHQLL) form a coiled coil. The 130-residue stretch at 1086–1215 (TIYFSDIVGF…DTVNTSSRME (130 aa)) folds into the Guanylate cyclase domain. Residues Asp-1091, Ile-1092, and Asp-1135 each contribute to the Mg(2+) site.

It belongs to the adenylyl cyclase class-4/guanylyl cyclase family. As to expression, expressed in head neurons, ventral cord and tail neurons, body wall muscle, hypodermis, somatic gonad and intestine. Isoform d is expressed specifically in AIA interneurons.

The protein localises to the cell membrane. Its subcellular location is the cell projection. The protein resides in the dendrite. It is found in the axon. It localises to the perikaryon. The enzyme catalyses GTP = 3',5'-cyclic GMP + diphosphate. Guanylate cyclase involved in the production of the second messenger cGMP. Regulates olfactory perception in AWC sensory neurons although may not be involved in the primary sensory transduction steps. In terms of biological role, isoforms c: Regulates sensory integration of conflicting sensory cues in AIA interneurons. Functionally, regulates sensory integration of conflicting sensory cues in AIA interneurons. In Caenorhabditis elegans, this protein is Receptor-type guanylate cyclase gcy-28.